The chain runs to 150 residues: UPF0178 protein BamMC406_1579 (150 aa).

The protein belongs to the UPF0178 family.

The protein is UPF0178 protein BamMC406_1579 of Burkholderia ambifaria (strain MC40-6).